Reading from the N-terminus, the 148-residue chain is Large ribosomal subunit protein bL9 (148 aa).

This sequence belongs to the bacterial ribosomal protein bL9 family.

Its function is as follows. Binds to the 23S rRNA. The polypeptide is Large ribosomal subunit protein bL9 (Stutzerimonas stutzeri (strain A1501) (Pseudomonas stutzeri)).